The primary structure comprises 132 residues: Ribosome-binding factor A (132 aa).

It belongs to the RbfA family. Monomer. Binds 30S ribosomal subunits, but not 50S ribosomal subunits or 70S ribosomes.

It is found in the cytoplasm. One of several proteins that assist in the late maturation steps of the functional core of the 30S ribosomal subunit. Associates with free 30S ribosomal subunits (but not with 30S subunits that are part of 70S ribosomes or polysomes). Required for efficient processing of 16S rRNA. May interact with the 5'-terminal helix region of 16S rRNA. The protein is Ribosome-binding factor A of Pseudomonas putida (strain ATCC 700007 / DSM 6899 / JCM 31910 / BCRC 17059 / LMG 24140 / F1).